A 397-amino-acid polypeptide reads, in one-letter code: Subtilisin-like protease 3 (397 aa).

An N-terminal signal peptide occupies residues 1 to 19; it reads MGCIKVISVFLAAIAAVDA. A propeptide spanning residues 20 to 116 is cleaved from the precursor; it reads RAFFHNRGGN…VEHDRVVKLA (97 aa). Residues 35–116 enclose the Inhibitor I9 domain; it reads SYIVVMKDGV…VEHDRVVKLA (82 aa). A Peptidase S8 domain is found at 126 to 397; sequence TWGLGRVSHK…NRLLYNGSGR (272 aa). Residues aspartate 158 and histidine 189 each act as charge relay system in the active site. Asparagine 250 carries N-linked (GlcNAc...) asparagine glycosylation. The active-site Charge relay system is the serine 344. The N-linked (GlcNAc...) asparagine glycan is linked to asparagine 393.

It belongs to the peptidase S8 family.

Its subcellular location is the secreted. Its function is as follows. Secreted subtilisin-like serine protease with keratinolytic activity that contributes to pathogenicity. This chain is Subtilisin-like protease 3 (SUB3), found in Arthroderma benhamiae (strain ATCC MYA-4681 / CBS 112371) (Trichophyton mentagrophytes).